The following is a 427-amino-acid chain: Peptidase B (427 aa).

Mn(2+) is bound by residues lysine 195 and aspartate 200. Lysine 207 is a catalytic residue. The Mn(2+) site is built by aspartate 218, aspartate 277, and glutamate 279. Residue arginine 281 is part of the active site.

Belongs to the peptidase M17 family. In terms of assembly, homohexamer. Mn(2+) is required as a cofactor.

The protein resides in the cytoplasm. It catalyses the reaction Release of an N-terminal amino acid, Xaa, from a peptide or arylamide. Xaa is preferably Glu or Asp but may be other amino acids, including Leu, Met, His, Cys and Gln.. In terms of biological role, probably plays an important role in intracellular peptide degradation. This chain is Peptidase B, found in Escherichia coli (strain SMS-3-5 / SECEC).